Here is a 140-residue protein sequence, read N- to C-terminus: Lymphocyte antigen 6H (140 aa).

Positions 1 to 25 (MLPAAMKGLGLALLAVLLCSAPAHG) are cleaved as a signal peptide. Positions 26-91 (LWCQDCTLTT…RHFFSDYLMG (66 aa)) constitute a UPAR/Ly6 domain. 5 disulfide bridges follow: C28/C52, C31/C40, C45/C73, C77/C104, and C105/C110. N-linked (GlcNAc...) asparagine glycosylation occurs at N36. G115 is lipidated: GPI-anchor amidated glycine. Positions 116–140 (AGHSPWALAGGLLLSLGPALLWAGP) are cleaved as a propeptide — removed in mature form.

In terms of assembly, interacts with CHRNA4 and CHRNA7. Highly expressed in brain (cerebral cortex, amygdala, hippocampus and subthalamic nucleus) and in acute human leukemic cell line MOLT-3. Also found in lower levels in testis, pancreas, small intestine and colon.

The protein resides in the cell membrane. Functionally, believed to act as a modulator of nicotinic acetylcholine receptors (nAChRs) activity. In vitro inhibits alpha-3:beta-4-containing nAChRs maximum response. May play a role in the intracellular trafficking of alpha-7-containing nAChRs and may inhibit their expression at the cell surface. Seems to inhibit alpha-7/CHRNA7 signaling in hippocampal neurons. The chain is Lymphocyte antigen 6H (LY6H) from Homo sapiens (Human).